A 401-amino-acid chain; its full sequence is Argininosuccinate synthase (401 aa).

ATP contacts are provided by residues 9–17 (AYSGGLDTS) and Ala36. Tyr87 and Ser92 together coordinate L-citrulline. Gly117 contacts ATP. L-aspartate-binding residues include Thr119, Asn123, and Asp124. Asn123 provides a ligand contact to L-citrulline. L-citrulline is bound by residues Arg127, Ser176, Ser185, Glu261, and Tyr273.

This sequence belongs to the argininosuccinate synthase family. Type 1 subfamily. In terms of assembly, homotetramer.

The protein resides in the cytoplasm. It catalyses the reaction L-citrulline + L-aspartate + ATP = 2-(N(omega)-L-arginino)succinate + AMP + diphosphate + H(+). It participates in amino-acid biosynthesis; L-arginine biosynthesis; L-arginine from L-ornithine and carbamoyl phosphate: step 2/3. This Syntrophobacter fumaroxidans (strain DSM 10017 / MPOB) protein is Argininosuccinate synthase.